Here is an 833-residue protein sequence, read N- to C-terminus: Translation initiation factor IF-2 (833 aa).

The 171-residue stretch at 331 to 501 (TRAPVVTVMG…LLIAEMQDLK (171 aa)) folds into the tr-type G domain. The G1 stretch occupies residues 340–347 (GHVDHGKT). 340–347 (GHVDHGKT) contacts GTP. The G2 stretch occupies residues 365-369 (GITQH). Positions 387–390 (DTPG) are G3. GTP contacts are provided by residues 387–391 (DTPGH) and 441–444 (NKID). The segment at 441-444 (NKID) is G4. The G5 stretch occupies residues 477-479 (SAL).

The protein belongs to the TRAFAC class translation factor GTPase superfamily. Classic translation factor GTPase family. IF-2 subfamily.

It localises to the cytoplasm. Functionally, one of the essential components for the initiation of protein synthesis. Protects formylmethionyl-tRNA from spontaneous hydrolysis and promotes its binding to the 30S ribosomal subunits. Also involved in the hydrolysis of GTP during the formation of the 70S ribosomal complex. The protein is Translation initiation factor IF-2 of Rickettsia canadensis (strain McKiel).